Here is a 406-residue protein sequence, read N- to C-terminus: ATPase ASNA1 homolog (406 aa).

21–28 contacts ATP; that stretch reads KGGVGKTT. Asp-62 is an active-site residue. ATP contacts are provided by Glu-300 and Asn-327. 2 residues coordinate Zn(2+): Cys-339 and Cys-342.

Belongs to the arsA ATPase family. In terms of assembly, homodimer.

It localises to the cytoplasm. The protein resides in the endoplasmic reticulum. ATPase required for the post-translational delivery of tail-anchored (TA) proteins to the endoplasmic reticulum. Recognizes and selectively binds the transmembrane domain of TA proteins in the cytosol. This complex then targets to the endoplasmic reticulum by membrane-bound receptors, where the tail-anchored protein is released for insertion. This process is regulated by ATP binding and hydrolysis. ATP binding drives the homodimer towards the closed dimer state, facilitating recognition of newly synthesized TA membrane proteins. ATP hydrolysis is required for insertion. Subsequently, the homodimer reverts towards the open dimer state, lowering its affinity for the membrane-bound receptor, and returning it to the cytosol to initiate a new round of targeting. This Leishmania braziliensis protein is ATPase ASNA1 homolog.